Reading from the N-terminus, the 224-residue chain is Lipoprotein-releasing system ATP-binding protein LolD (224 aa).

The ABC transporter domain maps to 4–224 (LSIRNVFKSY…RLAGGEVSEA (221 aa)). 40 to 47 (GASGAGKS) provides a ligand contact to ATP.

This sequence belongs to the ABC transporter superfamily. Lipoprotein translocase (TC 3.A.1.125) family. In terms of assembly, the complex is composed of two ATP-binding proteins (LolD) and two transmembrane proteins (LolC and LolE).

It is found in the cell inner membrane. In terms of biological role, part of the ABC transporter complex LolCDE involved in the translocation of mature outer membrane-directed lipoproteins, from the inner membrane to the periplasmic chaperone, LolA. Responsible for the formation of the LolA-lipoprotein complex in an ATP-dependent manner. This is Lipoprotein-releasing system ATP-binding protein LolD from Myxococcus xanthus (strain DK1622).